A 213-amino-acid polypeptide reads, in one-letter code: A-type ATP synthase subunit D (213 aa).

The protein belongs to the V-ATPase D subunit family. In terms of assembly, has multiple subunits with at least A(3), B(3), C, D, E, F, H, I and proteolipid K(x).

It localises to the cell membrane. Functionally, component of the A-type ATP synthase that produces ATP from ADP in the presence of a proton gradient across the membrane. The protein is A-type ATP synthase subunit D of Saccharolobus islandicus (strain Y.N.15.51 / Yellowstone #2) (Sulfolobus islandicus).